The primary structure comprises 353 residues: MKNDPLRILVAEDSPTARRLLVEIVRADPALTVVGEARDGVEAVELAQRLRPSLVTMDIQMPRMDGLEATRRIMTEVPTPVVVVSTLVERDIQTSMAALRAGALAVLQKPLGPESPDFDADSRRLRDTLKAMAEVKVVRRWPDRTAPPAPVPTPPAPPVSPTRPGVVALAASTGGPAALFRLLSELPASFPVPLLVVQHIAIGFSEGLAQWLRTAGPLPVKVAEDGEPLLPGHVYLAPDDRHLGVRGEGRAEVSRAAPVNGFRPSATWMFRSVARAYGPASLAVILTGMGQDGLEGVRELHGAGGRILAQDEQSSVVYGMPGVVVGANLAHEVVALPDLASRLTSAFRGSGGV.

The Response regulatory domain maps to 7-124 (RILVAEDSPT…SPDFDADSRR (118 aa)). 4-aspartylphosphate is present on Asp-58. The CheB-type methylesterase domain occupies 158-350 (PVSPTRPGVV…SRLTSAFRGS (193 aa)). Catalysis depends on residues Ser-172, His-199, and Asp-292.

This sequence belongs to the CheB family. Post-translationally, phosphorylated by CheA. Phosphorylation of the N-terminal regulatory domain activates the methylesterase activity.

The protein resides in the cytoplasm. The catalysed reaction is [protein]-L-glutamate 5-O-methyl ester + H2O = L-glutamyl-[protein] + methanol + H(+). It carries out the reaction L-glutaminyl-[protein] + H2O = L-glutamyl-[protein] + NH4(+). Functionally, involved in chemotaxis. Part of a chemotaxis signal transduction system that modulates chemotaxis in response to various stimuli. Catalyzes the demethylation of specific methylglutamate residues introduced into the chemoreceptors (methyl-accepting chemotaxis proteins or MCP) by CheR. Also mediates the irreversible deamidation of specific glutamine residues to glutamic acid. This chain is Protein-glutamate methylesterase/protein-glutamine glutaminase 4, found in Myxococcus xanthus (strain DK1622).